The primary structure comprises 263 residues: Large ribosomal subunit protein uL23m (263 aa).

The transit peptide at Met1 to Leu45 directs the protein to the mitochondrion.

Belongs to the universal ribosomal protein uL23 family. As to quaternary structure, component of the mitochondrial large ribosomal subunit (mt-LSU). Mature yeast 74S mitochondrial ribosomes consist of a small (37S) and a large (54S) subunit. The 37S small subunit contains a 15S ribosomal RNA (15S mt-rRNA) and 34 different proteins. The 54S large subunit contains a 21S rRNA (21S mt-rRNA) and 46 different proteins. uL23m forms the wall of the exit tunnel. Interacts with the C-terminus of OXA1.

It is found in the mitochondrion. Component of the mitochondrial ribosome (mitoribosome), a dedicated translation machinery responsible for the synthesis of mitochondrial genome-encoded proteins, including at least some of the essential transmembrane subunits of the mitochondrial respiratory chain. The mitoribosomes are attached to the mitochondrial inner membrane and translation products are cotranslationally integrated into the membrane. The polypeptide is Large ribosomal subunit protein uL23m (MRP20) (Saccharomyces cerevisiae (strain ATCC 204508 / S288c) (Baker's yeast)).